A 292-amino-acid polypeptide reads, in one-letter code: Oxidative stress-responsive serine-rich protein 1 (292 aa).

Positions 27-175 are disordered; that stretch reads SIASLSVGEG…SSDATQVSQA (149 aa). Basic residues predominate over residues 65–83; sequence STRKSSRGVVRTQRRRRSK. Residues Thr143 and Thr233 each carry the phosphothreonine modification.

This Pongo abelii (Sumatran orangutan) protein is Oxidative stress-responsive serine-rich protein 1 (OSER1).